A 446-amino-acid chain; its full sequence is Glutamate--tRNA ligase (446 aa).

The 'HIGH' region motif lies at 9 to 19; the sequence is PSPTGLLHVGN. Residues 240 to 244 carry the 'KMSKS' region motif; it reads GLSKR. Residue Lys243 coordinates ATP.

This sequence belongs to the class-I aminoacyl-tRNA synthetase family. Glutamate--tRNA ligase type 1 subfamily. In terms of assembly, monomer.

The protein localises to the cytoplasm. It catalyses the reaction tRNA(Glu) + L-glutamate + ATP = L-glutamyl-tRNA(Glu) + AMP + diphosphate. Functionally, catalyzes the attachment of glutamate to tRNA(Glu) in a two-step reaction: glutamate is first activated by ATP to form Glu-AMP and then transferred to the acceptor end of tRNA(Glu). This chain is Glutamate--tRNA ligase, found in Azospirillum brasilense.